The sequence spans 440 residues: Endoplasmic reticulum junction formation protein lunapark (440 aa).

At 1-45 (MGALLAKWRAKPSTVEVLEKMEKDIQSLEEFRDKNQKLRKIWVAR) the chain is on the cytoplasmic side. The stretch at 16-40 (EVLEKMEKDIQSLEEFRDKNQKLRK) forms a coiled coil. The helical transmembrane segment at 46–66 (LFFYSTILYILTSLTVYLWYL) threads the bilayer. The Lumenal segment spans residues 67-77 (PGGMTARLLTT). Residues 78–98 (LLFLLFPVLIWFVRTLLILWF) form a helical membrane-spanning segment. At 99 to 440 (SRRTERNNDA…ESEESFMETE (342 aa)) the chain is on the cytoplasmic side. A coiled-coil region spans residues 100–128 (RRTERNNDALELLKAEKKKILEEVMEKET). A disordered region spans residues 149-169 (LELPVPGPPITPRPGQDLRQR). Thr-159 bears the Phosphothreonine mark. Ser-177, Ser-179, Ser-188, and Ser-192 each carry phosphoserine. A Phosphothreonine modification is found at Thr-198. Residues 202-247 (QRDTSAPGGPPERSVQPTPQSNILQRRPGSPATAVSGMALHPPGPP) are disordered. Phosphoserine is present on residues Ser-206 and Ser-215. The span at 216 to 225 (VQPTPQSNIL) shows a compositional bias: polar residues. A Phosphothreonine modification is found at Thr-219. 2 positions are modified to phosphoserine: Ser-222 and Ser-231. The C4-type; plays a role in ER morphology zinc finger occupies 280–305 (CQQCFSHNGMALKEEFEYVAFRCAYC). The tract at residues 316 to 440 (PQAPRLQEIS…ESEESFMETE (125 aa)) is disordered. Ser-325 bears the Phosphoserine mark. Positions 334-343 (DSQGSVNTLQ) are enriched in polar residues. 2 stretches are compositionally biased toward acidic residues: residues 370 to 411 (QAIE…DDTE) and 431 to 440 (ESEESFMETE).

Belongs to the lunapark family. As to quaternary structure, homodimer; homodimerization requires the C4-type zinc finger motif and decreases during mitosis in a phosphorylation-dependent manner. In terms of processing, phosphorylated. Phosphorylation at Thr-159 and Ser-325 occurs during interphase. Phosphorylation at Ser-177, Ser-179, Ser-188, Ser-192, Thr-198, Ser-206, Ser-215, Thr-219, Ser-222 and Ser-231 occurs during mitosis; these phosphorylations reduce both its homodimerization and the ER three-way tubular junction formation.

The protein localises to the endoplasmic reticulum membrane. Endoplasmic reticulum (ER)-shaping membrane protein that plays a role in determining ER morphology. Involved in the stabilization of nascent three-way ER tubular junctions within the ER network. May also play a role as a curvature-stabilizing protein within three-way ER tubular junction network. The polypeptide is Endoplasmic reticulum junction formation protein lunapark (lnpk) (Xenopus laevis (African clawed frog)).